Reading from the N-terminus, the 572-residue chain is Proline--tRNA ligase (572 aa).

Belongs to the class-II aminoacyl-tRNA synthetase family. ProS type 1 subfamily. In terms of assembly, homodimer.

Its subcellular location is the cytoplasm. The enzyme catalyses tRNA(Pro) + L-proline + ATP = L-prolyl-tRNA(Pro) + AMP + diphosphate. Its function is as follows. Catalyzes the attachment of proline to tRNA(Pro) in a two-step reaction: proline is first activated by ATP to form Pro-AMP and then transferred to the acceptor end of tRNA(Pro). As ProRS can inadvertently accommodate and process non-cognate amino acids such as alanine and cysteine, to avoid such errors it has two additional distinct editing activities against alanine. One activity is designated as 'pretransfer' editing and involves the tRNA(Pro)-independent hydrolysis of activated Ala-AMP. The other activity is designated 'posttransfer' editing and involves deacylation of mischarged Ala-tRNA(Pro). The misacylated Cys-tRNA(Pro) is not edited by ProRS. The protein is Proline--tRNA ligase of Buchnera aphidicola subsp. Acyrthosiphon pisum (strain 5A).